The following is a 365-amino-acid chain: HLA class I histocompatibility antigen, A alpha chain (365 aa).

The N-terminal stretch at 1–24 is a signal peptide; it reads MAVMAPRTLLLLLSGALALTQTWA. Residues 3–11 form a VL9 epitope region; the sequence is VMAPRTLLL. Residues 25–114 are alpha-1; it reads GSHSMRYFFT…LRGYYNQSEA (90 aa). At 25 to 308 the chain is on the extracellular side; it reads GSHSMRYFFT…ELSSQPTIPI (284 aa). Residue Tyr31 participates in a peptide antigen binding. The residue at position 83 (Tyr83) is a Sulfotyrosine. Positions 97 and 108 each coordinate a peptide antigen. Asn110 carries an N-linked (GlcNAc...) asparagine glycan. Positions 115–206 are alpha-2; sequence GSHTIQIMYG…ENGKETLQRT (92 aa). An intrachain disulfide couples Cys125 to Cys188. The a peptide antigen site is built by Asp140, Thr167, Lys170, Tyr183, and Tyr195. Positions 207-298 are alpha-3; that stretch reads DPPKTHMTHH…GLPKPLTLRW (92 aa). In terms of domain architecture, Ig-like C1-type spans 209 to 295; sequence PKTHMTHHPI…QHEGLPKPLT (87 aa). An intrachain disulfide couples Cys227 to Cys283. The interval 299-308 is connecting peptide; it reads ELSSQPTIPI. The chain crosses the membrane as a helical span at residues 309 to 332; that stretch reads VGIIAGLVLLGAVITGAVVAAVMW. Over 333 to 365 the chain is Cytoplasmic; the sequence is RRKSSDRKGGSYTQAASSDSAQGSDVSLTACKV. Residues 339–365 form a disordered region; that stretch reads RKGGSYTQAASSDSAQGSDVSLTACKV. A Phosphoserine modification is found at Ser343. Residue Tyr344 is modified to Phosphotyrosine. Residues 346-359 show a composition bias toward low complexity; sequence QAASSDSAQGSDVS. Phosphoserine is present on residues Ser349, Ser350, Ser352, Ser356, and Ser359.

Belongs to the MHC class I family. In terms of assembly, heterotrimer that consists of an alpha chain HLA-A, a beta chain B2M and a peptide (peptide-HLA-A-B2M). Early in biogenesis, HLA-A-B2M dimer interacts with the components of the peptide-loading complex composed of TAPBP, TAP1-TAP2, TAPBPL, PDIA3/ERP57 and CALR. Interacts with TAP1-TAP2 transporter via TAPBP; this interaction is obligatory for the loading of peptide epitopes delivered to the ER by TAP1-TAP2 transporter. Interacts with TAPBPL; TAPBPL binds peptide-free HLA-A-B2M complexes or those loaded with low affinity peptides, likely facilitating peptide exchange for higher affinity peptides. Only optimally assembled peptide-HLA-B2M trimer translocates to the surface of antigen-presenting cells, where it interacts with TCR and CD8 coreceptor on the surface of T cells. HLA-A (via polymorphic alpha-1 and alpha-2 domains) interacts with antigen-specific TCR (via CDR3 domains). One HLA-A molecule (mainly via nonpolymorphic alpha-3 domain) interacts with one CD8A homodimer (via CDR-like loop); this interaction ensures peptide-HLA-A-B2M recognition by CD8-positive T cells only. Alleles A*23:01; A*24:02 and A*32:01 interact (via Bw4 motif) with KIR3DL1 on NK cells; this interaction is direct. As to quaternary structure, (Microbial infection) Interacts with HHV-8 MIR1 protein. (Microbial infection) Interacts with HTLV-1 accessory protein p12I. (Microbial infection) Polyubiquitinated in a post ER compartment by interaction with human herpesvirus 8 MIR1 protein. This targets the protein for rapid degradation via the ubiquitin system. Post-translationally, N-linked glycosylation at Asn-110. Ubiquitous.

The protein localises to the cell membrane. Its subcellular location is the endoplasmic reticulum membrane. Antigen-presenting major histocompatibility complex class I (MHCI) molecule. In complex with B2M/beta 2 microglobulin displays primarily viral and tumor-derived peptides on antigen-presenting cells for recognition by alpha-beta T cell receptor (TCR) on HLA-A-restricted CD8-positive T cells, guiding antigen-specific T cell immune response to eliminate infected or transformed cells. May also present self-peptides derived from the signal sequence of secreted or membrane proteins, although T cells specific for these peptides are usually inactivated to prevent autoreactivity. Both the peptide and the MHC molecule are recognized by TCR, the peptide is responsible for the fine specificity of antigen recognition and MHC residues account for the MHC restriction of T cells. Typically presents intracellular peptide antigens of 8 to 13 amino acids that arise from cytosolic proteolysis via IFNG-induced immunoproteasome or via endopeptidase IDE/insulin-degrading enzyme. Can bind different peptides containing allele-specific binding motifs, which are mainly defined by anchor residues at position 2 and 9. In terms of biological role, allele A*01:01: Presents a restricted peptide repertoire including viral epitopes derived from IAV NP/nucleoprotein (CTELKLSDY), IAV PB1/polymerase basic protein 1 (VSDGGPNLY), HAdV-11 capsid L3/hexon protein (LTDLGQNLLY), SARS-CoV-2 3a/ORF3a (FTSDYYQLY) as well as tumor peptide antigens including MAGE1 (EADPTGHSY), MAGEA3 (EVDPIGHLY) and WT1 (TSEKRPFMCAY), all having in common a canonical motif with a negatively charged Asp or Glu residue at position 3 and a Tyr anchor residue at the C-terminus. A number of HLA-A*01:01-restricted peptides carry a post-translational modification with oxidation and N-terminal acetylation being the most frequent. Fails to present highly immunogenic peptides from the EBV latent antigens. Functionally, allele A*02:01: A major allele in human populations, presents immunodominant viral epitopes derived from IAV M/matrix protein 1 (GILGFVFTL), HIV-1 env (TLTSCNTSV), HIV-1 gag-pol (ILKEPVHGV), HTLV-1 Tax (LLFGYPVYV), HBV C/core antigen (FLPSDFFPS), HCMV UL83/pp65 (NLVPMVATV) as well as tumor peptide antigens including MAGEA4 (GVYDGREHTV), WT1 (RMFPNAPYL) and CTAG1A/NY-ESO-1 (SLLMWITQC), all having in common hydrophobic amino acids at position 2 and at the C-terminal anchors. Its function is as follows. Allele A*03:01: Presents viral epitopes derived from IAV NP (ILRGSVAHK), HIV-1 nef (QVPLRPMTYK), HIV-1 gag-pol (AIFQSSMTK), SARS-CoV-2 N/nucleoprotein (KTFPPTEPK) as well as tumor peptide antigens including PMEL (LIYRRRLMK), NODAL (HAYIQSLLK), TRP-2 (RMYNMVPFF), all having in common hydrophobic amino acids at position 2 and Lys or Arg anchor residues at the C-terminus. May also display spliced peptides resulting from the ligation of two separate proteasomal cleavage products that are not contiguous in the parental protein. Allele A*11:01: Presents several immunodominant epitopes derived from HIV-1 gag-pol and HHV-4 EBNA4, containing the peptide motif with Val, Ile, Thr, Leu, Tyr or Phe at position 2 and Lys anchor residue at the C-terminus. Important in the control of HIV-1, EBV and HBV infections. Presents an immunodominant epitope derived from SARS-CoV-2 N/nucleoprotein (KTFPPTEPK). In terms of biological role, allele A*23:01: Interacts with natural killer (NK) cell receptor KIR3DL1 and may contribute to functional maturation of NK cells and self-nonself discrimination during innate immune response. Functionally, allele A*24:02: Presents viral epitopes derived from HIV-1 nef (RYPLTFGWCF), EBV lytic- and latent-cycle antigens BRLF1 (TYPVLEEMF), BMLF1 (DYNFVKQLF) and LMP2 (IYVLVMLVL), SARS-CoV nucleocapsid/N (QFKDNVILL), as well as tumor peptide antigens including PRAME (LYVDSLFFL), all sharing a common signature motif, namely an aromatic residue Tyr or Phe at position 2 and a nonhydrophobic anchor residue Phe, Leu or Iso at the C-terminus. Interacts with natural killer (NK) cell receptor KIR3DL1 and may contribute to functional maturation of NK cells and self-nonself discrimination during innate immune response. Its function is as follows. Allele A*26:01: Presents several epitopes derived from HIV-1 gag-pol (EVIPMFSAL, ETKLGKAGY) and env (LVSDGGPNLY), carrying as anchor residues preferentially Glu at position 1, Val or Thr at position 2 and Tyr at the C-terminus. Allele A*29:02: Presents peptides having a common motif, namely a Glu residue at position 2 and Tyr or Leu anchor residues at the C-terminus. In terms of biological role, allele A*32:01: Interacts with natural killer (NK) cell receptor KIR3DL1 and may contribute to functional maturation of NK cells and self-nonself discrimination during innate immune response. Functionally, allele A*68:01: Presents viral epitopes derived from IAV NP (KTGGPIYKR) and HIV-1 tat (ITKGLGISYGR), having a common signature motif namely, Val or Thr at position 2 and positively charged residues Arg or Lys at the C-terminal anchor. Its function is as follows. Allele A*74:01: Presents immunodominant HIV-1 epitopes derived from gag-pol (GQMVHQAISPR, QIYPGIKVR) and rev (RQIHSISER), carrying an aliphatic residue at position 2 and Arg anchor residue at the C-terminus. May contribute to viral load control in chronic HIV-1 infection. The protein is HLA class I histocompatibility antigen, A alpha chain of Homo sapiens (Human).